Consider the following 129-residue polypeptide: Replication initiation control protein YabA (129 aa).

His-103, Cys-105, Cys-119, and Cys-122 together coordinate Zn(2+).

Belongs to the YabA family. Homotetramer. Interacts with both DnaA and DnaN, acting as a bridge between these two proteins. Zn(2+) is required as a cofactor.

The protein localises to the cytoplasm. It is found in the nucleoid. Involved in control of chromosome replication initiation. Inhibits the cooperative binding of DnaA to the oriC region, thus negatively regulating initiation of chromosome replication. Inhibits the ability of DnaA-ATP to form a helix on DNA; does not disassemble preformed DnaA-DNA helices. Decreases the residence time of DnaA on the chromosome at its binding sites (oriC, replication forks and promoter-binding sites). Tethers DnaA to the replication machinery via the DNA polymerase beta sliding clamp subunit (dnaN). Associates with oriC and other DnaA targets on the chromosome in a DnaA-dependent manner. In Listeria innocua serovar 6a (strain ATCC BAA-680 / CLIP 11262), this protein is Replication initiation control protein YabA.